The chain runs to 113 residues: Hemerythrin (113 aa).

Residues His-25, His-54, Glu-58, His-73, His-77, His-101, and Asp-106 each coordinate Fe cation.

Belongs to the hemerythrin family. As to quaternary structure, homotrimer.

Hemerythrin is a respiratory protein in blood cells of certain marine worms. The oxygen-binding site in each chain contains two iron atoms. The protein is Hemerythrin of Siphonosoma cumanense (Sipunculan worm).